The primary structure comprises 226 residues: Transcription repressor OFP12 (226 aa).

Residues 68–87 (SSTFTASTSTAANSSSSSAS) show a composition bias toward low complexity. Residues 68-104 (SSTFTASTSTAANSSSSSASYDDSDNYGFAPDDDSPP) are disordered. In terms of domain architecture, OVATE spans 152–217 (VKHYVQSPDP…IRAFADILVS (66 aa)).

Interacts with KNAT1, KNAT2, KNAT3 and KNAT4. As to expression, expressed in roots, shoots, stems, flower buds and siliques.

It is found in the nucleus. Functionally, transcriptional repressor that regulates multiple aspects of plant growth and development through the regulation of BEL1-LIKE (BLH) and KNOX TALE (KNAT) homeodomain transcription factors. This is Transcription repressor OFP12 (OFP12) from Arabidopsis thaliana (Mouse-ear cress).